The following is a 154-amino-acid chain: 3-hydroxyacyl-[acyl-carrier-protein] dehydratase FabZ (154 aa).

The active site involves His-60.

The protein belongs to the thioester dehydratase family. FabZ subfamily.

It is found in the cytoplasm. The enzyme catalyses a (3R)-hydroxyacyl-[ACP] = a (2E)-enoyl-[ACP] + H2O. Functionally, involved in unsaturated fatty acids biosynthesis. Catalyzes the dehydration of short chain beta-hydroxyacyl-ACPs and long chain saturated and unsaturated beta-hydroxyacyl-ACPs. The polypeptide is 3-hydroxyacyl-[acyl-carrier-protein] dehydratase FabZ (Actinobacillus pleuropneumoniae serotype 5b (strain L20)).